The chain runs to 468 residues: Chromosomal replication initiator protein DnaA (468 aa).

Positions 1–84 (MSSSLWLQCM…RFEVGSRPVA (84 aa)) are domain I, interacts with DnaA modulators. The interval 81–113 (RPVAAPKPAPTRTPADVAAESSAPAQLQARKPV) is disordered. Positions 84 to 131 (AAPKPAPTRTPADVAAESSAPAQLQARKPVHKTWDDDAQAIADINHRS) are domain II. Residues 132 to 348 (NVNPKHKFNN…GALNRVIANA (217 aa)) form a domain III, AAA+ region region. 4 residues coordinate ATP: G176, G178, K179, and T180. The tract at residues 349 to 468 (NFTGRPITID…YSNLIRTLSS (120 aa)) is domain IV, binds dsDNA.

It belongs to the DnaA family. As to quaternary structure, oligomerizes as a right-handed, spiral filament on DNA at oriC.

Its subcellular location is the cytoplasm. Its function is as follows. Plays an essential role in the initiation and regulation of chromosomal replication. ATP-DnaA binds to the origin of replication (oriC) to initiate formation of the DNA replication initiation complex once per cell cycle. Binds the DnaA box (a 9 base pair repeat at the origin) and separates the double-stranded (ds)DNA. Forms a right-handed helical filament on oriC DNA; dsDNA binds to the exterior of the filament while single-stranded (ss)DNA is stabiized in the filament's interior. The ATP-DnaA-oriC complex binds and stabilizes one strand of the AT-rich DNA unwinding element (DUE), permitting loading of DNA polymerase. After initiation quickly degrades to an ADP-DnaA complex that is not apt for DNA replication. Binds acidic phospholipids. The protein is Chromosomal replication initiator protein DnaA of Vibrio vulnificus (strain CMCP6).